A 203-amino-acid chain; its full sequence is Undecaprenyl phosphate transporter A (203 aa).

The next 5 membrane-spanning stretches (helical) occupy residues Ala-16–Leu-36, Leu-48–Leu-68, Tyr-108–Ile-128, Val-137–Leu-157, and Leu-173–Ile-193.

This sequence belongs to the DedA family.

It localises to the cell membrane. Its function is as follows. Flippase that catalyzes the transport of undecaprenyl phosphate (UndP) across the cytoplasmic membrane, from the external side to the cytoplasmic side. Is involved in UndP recycling during peptidoglycan synthesis. The polypeptide is Undecaprenyl phosphate transporter A (Staphylococcus aureus (strain NCTC 8325 / PS 47)).